Reading from the N-terminus, the 472-residue chain is CAAX prenyl protease 1 homolog (472 aa).

Over 1 to 8 (MDVGGALD) the chain is Lumenal. Residues 9–29 (LYGCSVNVYNAILIFIWVLFL) form a helical membrane-spanning segment. The Cytoplasmic portion of the chain corresponds to 30–75 (WETYINLRQLKVAKRVTESPEEIKCLMNDVDFDKSRRYAIDKMNFD). A helical transmembrane segment spans residues 76–96 (IVSGFYNILSLSAVLYFQLIA). Residues 97 to 124 (WAWHKSQEHMLFVCSYAPRSFGTTEGSE) are Lumenal-facing. A helical transmembrane segment spans residues 125–145 (ILFSLLFTVYVALFQFFESLP). Residues 146–175 (WSYYRHFVIEERYGFNKQTIGFFIKDRLKS) lie on the Cytoplasmic side of the membrane. A helical transmembrane segment spans residues 176–196 (LAVGLVIGLPIISMLVWIIKA). Over 197–207 (GGHYFYIYAYG) the chain is Lumenal. Residues 208-228 (FTFVVSFIIMFIYPEFIAPIF) traverse the membrane as a helical segment. Residues 229-340 (DRYEHFPDCE…LGHWKLKHMT (112 aa)) lie on the Cytoplasmic side of the membrane. Position 329 (histidine 329) interacts with Zn(2+). Glutamate 330 is an active-site residue. Histidine 333 contacts Zn(2+). A helical membrane pass occupies residues 341-361 (FNLIIAQINIFFMFFAFGQLI). Residues 362 to 382 (NVDQLFVDFGFPPSTAPILIR) lie on the Lumenal side of the membrane. A helical membrane pass occupies residues 383–403 (LIVVFQFIFMPYSSVLEFLMT). Topologically, residues 404-472 (MLSRKFEFQA…AIDAKMGKEK (69 aa)) are cytoplasmic. Glutamate 410 provides a ligand contact to Zn(2+). The Proton donor role is filled by aspartate 414.

This sequence belongs to the peptidase M48A family. Homodimer; disulfide-linked. Zn(2+) is required as a cofactor.

It localises to the endoplasmic reticulum membrane. The enzyme catalyses Hydrolyzes the peptide bond -P2-(S-farnesyl or geranylgeranyl)C-P1'-P2'-P3'-COOH where P1' and P2' are amino acids with aliphatic side chains and P3' is any C-terminal residue.. Its activity is regulated as follows. Inhibited by ethylenediaminetetraacetic acid (EDTA) but not by serine, aspartic or cysteine protease inhibitors. Inhibited by high concentration of Zn(2+) (&gt; 0.1 mM). Its function is as follows. Zinc-dependent metalloproteinase. Proteolytically removes the C-terminal three residues of farnesylated proteins. The chain is CAAX prenyl protease 1 homolog from Taenia solium (Pork tapeworm).